Reading from the N-terminus, the 613-residue chain is Glutaminase 1 (613 aa).

Residues 33-315 (GAVADYIPEL…LSSHYDLHML (283 aa)) are glutaminase. Positions 75, 124, 168, 175, 199, 251, and 269 each coordinate substrate. Residues 345 to 457 (REILAAHEQE…LDTAIEWAED (113 aa)) enclose the STAS domain. Position 480–595 (480–595 (LLEGLSADEL…ERIMRNLAQL (116 aa))) interacts with a nucleoside 3',5'-cyclic phosphate.

Belongs to the glutaminase family. Homotetramer.

It carries out the reaction L-glutamine + H2O = L-glutamate + NH4(+). The protein is Glutaminase 1 (glsA1) of Bradyrhizobium diazoefficiens (strain JCM 10833 / BCRC 13528 / IAM 13628 / NBRC 14792 / USDA 110).